Reading from the N-terminus, the 160-residue chain is Troponin C, skeletal muscle (160 aa).

Position 2 is an N-acetylthreonine (T2). EF-hand domains follow at residues 15 to 50, 51 to 86, 91 to 126, and 127 to 160; these read EMIA…LGQT, PTKE…QMKE, KSEE…SGEH, and VTEE…EGVQ. The Ca(2+) site is built by D28, D30, D34, E39, D64, D66, S68, T70, E75, D104, N106, D108, Y110, E115, D140, N142, D144, R146, and E151.

It belongs to the troponin C family. In terms of tissue distribution, fast skeletal muscle.

Its function is as follows. Troponin is the central regulatory protein of striated muscle contraction. Tn consists of three components: Tn-I which is the inhibitor of actomyosin ATPase, Tn-T which contains the binding site for tropomyosin and Tn-C. The binding of calcium to Tn-C abolishes the inhibitory action of Tn on actin filaments. In Mus musculus (Mouse), this protein is Troponin C, skeletal muscle (Tnnc2).